The sequence spans 259 residues: MSETGQRESVRPSPIFLGLLGLTAVGGALAWLAGETVQPLAYAGVFVMVIAGWLVSLCLHEFGHAFTAWRFGDHDVAVRGYLTLDPRRYSHPMLSLGLPMLFIALGGIGLPGAAVYVHTWFMTTARRTLVSLAGPTVNLALAMLLLAATRLLFDPIHAVLWAGVAFLAFLQLTALVLNLLPIPGLDGYAALEPHLRPETQRALAPAKQFALVFLLVLFLAPTLNGWFFGVVYWLFDLSGVSHRLAAAGSVLARFWSIWF.

Helical transmembrane passes span 14–34 and 39–59; these read PIFL…WLAG and PLAY…SLCL. His60 contributes to the Zn(2+) binding site. Residue Glu61 is part of the active site. Zn(2+) is bound at residue His64. The next 4 membrane-spanning stretches (helical) occupy residues 97 to 117, 128 to 148, 156 to 176, and 211 to 231; these read GLPM…AVYV, TLVS…LLAA, IHAV…TALV, and LVFL…FGVV.

Belongs to the peptidase M50B family. The cofactor is Zn(2+).

The protein localises to the cell membrane. In Mycobacterium tuberculosis (strain ATCC 25618 / H37Rv), this protein is Putative zinc metalloprotease Rip2 (rip2).